The chain runs to 511 residues: Dihydrolipoyl dehydrogenase, mitochondrial (511 aa).

FAD is bound by residues 75-84 (EKRGTLGGTC), Lys-93, Gly-157, and 187-189 (TGS). Cys-84 and Cys-89 are disulfide-bonded. NAD(+)-binding positions include 224-231 (GGGIIGLE), Glu-247, Leu-281, and Gly-316. FAD contacts are provided by residues Asp-357 and 363–366 (MLAH). The Proton acceptor role is filled by His-489.

This sequence belongs to the class-I pyridine nucleotide-disulfide oxidoreductase family. Homodimer. It depends on FAD as a cofactor.

It is found in the mitochondrion matrix. It carries out the reaction N(6)-[(R)-dihydrolipoyl]-L-lysyl-[protein] + NAD(+) = N(6)-[(R)-lipoyl]-L-lysyl-[protein] + NADH + H(+). Functionally, lipoamide dehydrogenase is a component of the alpha-ketoacid dehydrogenase complexes. Malfunction of this protein blocks the progression of cell cycle from G1 to S phase. This chain is Dihydrolipoyl dehydrogenase, mitochondrial (dld1), found in Schizosaccharomyces pombe (strain 972 / ATCC 24843) (Fission yeast).